The following is a 236-amino-acid chain: 2,3,4,5-tetrahydropyridine-2,6-dicarboxylate N-acetyltransferase (236 aa).

This sequence belongs to the transferase hexapeptide repeat family. DapH subfamily.

It carries out the reaction (S)-2,3,4,5-tetrahydrodipicolinate + acetyl-CoA + H2O = L-2-acetamido-6-oxoheptanedioate + CoA. Its pathway is amino-acid biosynthesis; L-lysine biosynthesis via DAP pathway; LL-2,6-diaminopimelate from (S)-tetrahydrodipicolinate (acetylase route): step 1/3. Catalyzes the transfer of an acetyl group from acetyl-CoA to tetrahydrodipicolinate. In Lactiplantibacillus plantarum (strain ATCC BAA-793 / NCIMB 8826 / WCFS1) (Lactobacillus plantarum), this protein is 2,3,4,5-tetrahydropyridine-2,6-dicarboxylate N-acetyltransferase.